The chain runs to 129 residues: MKLLGVLITIYCIASTLAIDVNVPSNGMADLNPVVNDGKSETEWTITTSANCHILLSCAVKGEESCDDVSIVTKDGDKERKLCPMATNSFTVQDFINEKVYVKIMTTGKDYKASCKAYSITNPKQPNQA.

Residues 1 to 18 (MKLLGVLITIYCIASTLA) form the signal peptide. Residues 19 to 121 (IDVNVPSNGM…KASCKAYSIT (103 aa)) form the CUB domain. A disulfide bond links Cys-66 and Cys-83.

This sequence belongs to the venom CUB family. In terms of processing, contains 2 disulfide bonds. Expressed by the venom gland.

It is found in the secreted. In Platymeris rhadamanthus (Red spot assassin bug), this protein is Venom CUB domain-containing protein 1.